A 185-amino-acid chain; its full sequence is uncharacterized protein (185 aa).

The N-acetyltransferase domain occupies 9-169; that stretch reads VILELAKESD…NGREDDKPLL (161 aa).

This is an uncharacterized protein from Bacillus subtilis (strain 168).